Consider the following 217-residue polypeptide: Large ribosomal subunit protein uL1 (217 aa).

It belongs to the universal ribosomal protein uL1 family.

This Eremothecium gossypii (strain ATCC 10895 / CBS 109.51 / FGSC 9923 / NRRL Y-1056) (Yeast) protein is Large ribosomal subunit protein uL1 (RPL10A).